The chain runs to 160 residues: Probable NADH dehydrogenase [ubiquinone] 1 beta subcomplex subunit 2, mitochondrial (160 aa).

Belongs to the complex I NDUFB2 subunit family. As to quaternary structure, complex I is composed of 45 different subunits.

The protein localises to the mitochondrion inner membrane. In terms of biological role, accessory subunit of the mitochondrial membrane respiratory chain NADH dehydrogenase (Complex I), that is believed not to be involved in catalysis. Complex I functions in the transfer of electrons from NADH to the respiratory chain. The immediate electron acceptor for the enzyme is believed to be ubiquinone. This Caenorhabditis briggsae protein is Probable NADH dehydrogenase [ubiquinone] 1 beta subcomplex subunit 2, mitochondrial.